Here is a 470-residue protein sequence, read N- to C-terminus: Cell division protein FtsA (470 aa).

The disordered stretch occupies residues 416–470; that stretch reads NKKDTHENEVESTDEEIYQSEDNHQEHKQNHEHVQDKDKDKEESKFKKLMKSLFE. Residues 425–434 show a composition bias toward acidic residues; it reads VESTDEEIYQ. Residues 436 to 461 show a composition bias toward basic and acidic residues; the sequence is EDNHQEHKQNHEHVQDKDKDKEESKF.

This sequence belongs to the FtsA/MreB family. In terms of assembly, self-interacts. Interacts with FtsZ.

It localises to the cell membrane. Its function is as follows. Cell division protein that is involved in the assembly of the Z ring. May serve as a membrane anchor for the Z ring. The protein is Cell division protein FtsA of Staphylococcus aureus (strain MSSA476).